We begin with the raw amino-acid sequence, 152 residues long: MGFAEAFLEHLWKNLQDPSNPAIIRQAAGNYIGSFLARAKFISLITVKPCLDLLVNWLHIYLNNQDSGTKAFCDVALHGPFYSACQAVFYTFVFRHKQLLSGNLKEGLQYPQSLNFERIVMSQLNPLKICLPSVVNFFAAITKMKTCGYGWW.

It belongs to the RRN3 family.

The polypeptide is Putative RRN3-like protein RRN3P1 (RRN3P1) (Homo sapiens (Human)).